We begin with the raw amino-acid sequence, 267 residues long: Methylglyoxal reductase DkgB (267 aa).

Tyr39 acts as the Proton donor in catalysis. Position 97 (His97) interacts with substrate. 179–231 (MTLAYGKALKDEVIARIAVKHNATPVQVILAWAMGEGYSVIPSSTRRENLASN) is an NADP(+) binding site.

It belongs to the aldo/keto reductase family. As to quaternary structure, monomer.

The protein resides in the cytoplasm. The catalysed reaction is hydroxyacetone + NADP(+) = methylglyoxal + NADPH + H(+). Its function is as follows. Aldo-keto reductase that significantly contributes to cellular methylglyoxal detoxification by catalyzing the NADPH-dependent conversion of methylglyoxal to acetol. This is Methylglyoxal reductase DkgB from Salmonella typhi.